The following is a 405-amino-acid chain: MNQQLSCDHLWFGADIVTMQNGRYGIIEQGAIAVSGQQIIWVGPYADSAHIQARQRTDLGGGIVTPGLVDCHTHLVFGGDRSDEFEQRLNGVSYSEIAAQVGGILATVRATRSASQAELVDAARQRLQHLLAEGVTTVEIKSGYGLEVASELRMLQAIRQLAQQVPAQIQATCLAAHAVPPEYRHDPEAWVDVICDQLLPQVAAEGLADAVDAFCEHLAFSPDQVRRVFIAAKALGFALKLHAEQLSSLGGSALAAEFDALSADHVEYATESDVAAMAQHGTVAVLLPGAFYLLREKQRPPVELFRRYQVPMALASDANPGTSPALSLRLMMNMGCTLFGMTPEEALAGVTLHAARALGLAQRIGSLESGKMADFVHWPLARPAELVYWLGGQLPCRVIFRGEER.

Fe(3+) is bound by residues H72 and H74. Residues H72 and H74 each contribute to the Zn(2+) site. 4-imidazolone-5-propanoate is bound by residues R81, Y144, and H177. Y144 is a binding site for N-formimidoyl-L-glutamate. H242 contacts Fe(3+). A Zn(2+)-binding site is contributed by H242. A 4-imidazolone-5-propanoate-binding site is contributed by Q245. A Fe(3+)-binding site is contributed by D317. D317 provides a ligand contact to Zn(2+). Positions 319 and 321 each coordinate N-formimidoyl-L-glutamate. T322 contacts 4-imidazolone-5-propanoate.

This sequence belongs to the metallo-dependent hydrolases superfamily. HutI family. The cofactor is Zn(2+). Fe(3+) is required as a cofactor.

It is found in the cytoplasm. The enzyme catalyses 4-imidazolone-5-propanoate + H2O = N-formimidoyl-L-glutamate. Its pathway is amino-acid degradation; L-histidine degradation into L-glutamate; N-formimidoyl-L-glutamate from L-histidine: step 3/3. Catalyzes the hydrolytic cleavage of the carbon-nitrogen bond in imidazolone-5-propanoate to yield N-formimidoyl-L-glutamate. It is the third step in the universal histidine degradation pathway. This Erwinia tasmaniensis (strain DSM 17950 / CFBP 7177 / CIP 109463 / NCPPB 4357 / Et1/99) protein is Imidazolonepropionase.